Here is a 1293-residue protein sequence, read N- to C-terminus: Phosphoribosylformylglycinamidine synthase (1293 aa).

Residues 308–319 (GAATGAGGEIRD) and A675 contribute to the ATP site. 4 residues coordinate Mg(2+): D676, E715, N719, and D883. Residue S885 participates in ATP binding. One can recognise a Glutamine amidotransferase type-1 domain in the interval 1040-1293 (MAILREQGVN…MFRNARKFIG (254 aa)). C1133 serves as the catalytic Nucleophile. Catalysis depends on residues H1258 and E1260.

The protein in the N-terminal section; belongs to the FGAMS family. As to quaternary structure, monomer.

The protein resides in the cytoplasm. The enzyme catalyses N(2)-formyl-N(1)-(5-phospho-beta-D-ribosyl)glycinamide + L-glutamine + ATP + H2O = 2-formamido-N(1)-(5-O-phospho-beta-D-ribosyl)acetamidine + L-glutamate + ADP + phosphate + H(+). The protein operates within purine metabolism; IMP biosynthesis via de novo pathway; 5-amino-1-(5-phospho-D-ribosyl)imidazole from N(2)-formyl-N(1)-(5-phospho-D-ribosyl)glycinamide: step 1/2. Functionally, phosphoribosylformylglycinamidine synthase involved in the purines biosynthetic pathway. Catalyzes the ATP-dependent conversion of formylglycinamide ribonucleotide (FGAR) and glutamine to yield formylglycinamidine ribonucleotide (FGAM) and glutamate. The sequence is that of Phosphoribosylformylglycinamidine synthase from Methylobacillus flagellatus (strain ATCC 51484 / DSM 6875 / VKM B-1610 / KT).